Reading from the N-terminus, the 722-residue chain is Exocyst complex component 3-like protein 4 (722 aa).

Disordered stretches follow at residues 1–53 (MPSP…LGSL) and 92–131 (NDGPATGHSQATPEVPSGVMNGVSQQASTGAASEELKPEA). Positions 34–46 (SRKEPNAHRKDGT) are enriched in basic and acidic residues. Ser-52 is modified (phosphoserine). Positions 113 to 122 (GVSQQASTGA) are enriched in polar residues. Ser-513 bears the Phosphoserine mark.

It belongs to the SEC6 family.

The polypeptide is Exocyst complex component 3-like protein 4 (EXOC3L4) (Homo sapiens (Human)).